Consider the following 250-residue polypeptide: UPF0758 protein RPB_0700 (250 aa).

The segment at 1–27 (MVDPISNAAPPMPADSSERLDPPGFAE) is disordered. Positions 128 to 250 (VLSSWSAVID…HASLKGLKLF (123 aa)) constitute an MPN domain. Zn(2+) contacts are provided by histidine 199, histidine 201, and aspartate 212. The JAMM motif motif lies at 199 to 212 (HNHPSGDPTPSQAD).

Belongs to the UPF0758 family.

In Rhodopseudomonas palustris (strain HaA2), this protein is UPF0758 protein RPB_0700.